Reading from the N-terminus, the 557-residue chain is Cytochrome P450 monooxygenase FSL4 (557 aa).

The next 2 helical transmembrane spans lie at 6-26 and 32-52; these read LWLV…IFLL and IVVC…YWTV. Residues asparagine 127 and asparagine 393 are each glycosylated (N-linked (GlcNAc...) asparagine). Cysteine 494 is a heme binding site.

It belongs to the cytochrome P450 family. Requires heme as cofactor.

The protein localises to the membrane. It participates in secondary metabolite biosynthesis. Cytochrome P450 monooxygenase; part of the gene cluster that mediates the biosynthesis of fusarielins F, G and H, decaketide compounds with 5 methylations and a decaline core that act as mycoestrogens as they stimulate growth of MCF-7 breast cancer cells. The initial compound in the pathway is produced by the reducing polyketide synthase FSL1. FSL1 lacks an active enoyl reductase (ER) domain and biosynthesis of fusarielins relies on the trans-acting enoyl reductase FSL5, before it is released through hydrolysis catalyzed by the thioesterase FSL2. Fusarielins F, G, and H have a C11=C12 cis double bond and is fully reduced between C10 and C11 and between C12 and C13. FSL3 can be involved in the formation of the C11=C12 cis double bond by moving a hypothetical C10=C11 or C12=C13 trans double bond to form prefusarielin. Prefusarielin is oxygenated at C15 and C16 by FSL4, resulting in fusarielin F, which subsequently is epoxidized into fusarielin G by the same enzyme. The final step in the pathway is a reduction of the carboxylic acid moiety to yield fusarielin H via a still undetermined mechanism. The chain is Cytochrome P450 monooxygenase FSL4 from Gibberella zeae (strain ATCC MYA-4620 / CBS 123657 / FGSC 9075 / NRRL 31084 / PH-1) (Wheat head blight fungus).